The chain runs to 37 residues: uncharacterized protein (37 aa).

This is an uncharacterized protein from Bacillus caldotenax.